The following is a 32-amino-acid chain: Delta-conotoxin-like CnVIB (32 aa).

3 cysteine pairs are disulfide-bonded: Cys-3–Cys-18, Cys-10–Cys-22, and Cys-17–Cys-27. 4-hydroxyproline is present on residues Pro-6 and Pro-14.

The protein belongs to the conotoxin O1 superfamily. As to expression, expressed by the venom duct.

The protein resides in the secreted. In terms of biological role, delta-conotoxins bind to site 6 of voltage-gated sodium channels (Nav) and inhibit the inactivation process. This toxin acts on Nav1.4/SCN4A and Nav1.6/SCN8A (EC(50)=2.3 uM). This is Delta-conotoxin-like CnVIB from Conus consors (Singed cone).